A 268-amino-acid chain; its full sequence is Putative cysteine-rich repeat secretory protein 5 (268 aa).

The first 24 residues, 1–24, serve as a signal peptide directing secretion; the sequence is MTGINTHFAVALFCFFSFSLRAMS. Gnk2-homologous domains are found at residues 27-129 and 135-248; these read SQML…NVSF and DVPS…ISAL.

The protein belongs to the cysteine-rich repeat secretory protein family.

It localises to the secreted. The polypeptide is Putative cysteine-rich repeat secretory protein 5 (CRRSP5) (Arabidopsis thaliana (Mouse-ear cress)).